Reading from the N-terminus, the 174-residue chain is Shikimate kinase (174 aa).

An ATP-binding site is contributed by 15–20; sequence GTGKST. Serine 19 provides a ligand contact to Mg(2+). 3 residues coordinate substrate: aspartate 37, arginine 61, and glycine 82. Residue arginine 120 coordinates ATP. Residue arginine 138 coordinates substrate.

It belongs to the shikimate kinase family. As to quaternary structure, monomer. The cofactor is Mg(2+).

The protein resides in the cytoplasm. It carries out the reaction shikimate + ATP = 3-phosphoshikimate + ADP + H(+). Its pathway is metabolic intermediate biosynthesis; chorismate biosynthesis; chorismate from D-erythrose 4-phosphate and phosphoenolpyruvate: step 5/7. Functionally, catalyzes the specific phosphorylation of the 3-hydroxyl group of shikimic acid using ATP as a cosubstrate. The sequence is that of Shikimate kinase from Staphylococcus aureus (strain MRSA252).